Consider the following 236-residue polypeptide: Ubiquinone biosynthesis O-methyltransferase (236 aa).

4 residues coordinate S-adenosyl-L-methionine: Arg40, Gly59, Asp80, and Leu124.

Belongs to the methyltransferase superfamily. UbiG/COQ3 family.

It catalyses the reaction a 3-demethylubiquinol + S-adenosyl-L-methionine = a ubiquinol + S-adenosyl-L-homocysteine + H(+). It carries out the reaction a 3-(all-trans-polyprenyl)benzene-1,2-diol + S-adenosyl-L-methionine = a 2-methoxy-6-(all-trans-polyprenyl)phenol + S-adenosyl-L-homocysteine + H(+). Its pathway is cofactor biosynthesis; ubiquinone biosynthesis. Its function is as follows. O-methyltransferase that catalyzes the 2 O-methylation steps in the ubiquinone biosynthetic pathway. This is Ubiquinone biosynthesis O-methyltransferase from Nitrosococcus oceani (strain ATCC 19707 / BCRC 17464 / JCM 30415 / NCIMB 11848 / C-107).